A 185-amino-acid polypeptide reads, in one-letter code: Ribosome-recycling factor (185 aa).

It belongs to the RRF family.

The protein localises to the cytoplasm. Responsible for the release of ribosomes from messenger RNA at the termination of protein biosynthesis. May increase the efficiency of translation by recycling ribosomes from one round of translation to another. This Aeromonas salmonicida (strain A449) protein is Ribosome-recycling factor.